We begin with the raw amino-acid sequence, 399 residues long: Elongation factor Tu (399 aa).

A tr-type G domain is found at 10-204 (KPHVNIGTIG…AVDSSIPEPE (195 aa)). The segment at 19-26 (GHVDHGKT) is G1. Position 19-26 (19-26 (GHVDHGKT)) interacts with GTP. T26 is a Mg(2+) binding site. Residues 60–64 (GITIN) are G2. The G3 stretch occupies residues 81 to 84 (DCPG). GTP is bound by residues 81–85 (DCPGH) and 136–139 (NKCD). The tract at residues 136-139 (NKCD) is G4. The tract at residues 174–176 (SGL) is G5.

The protein belongs to the TRAFAC class translation factor GTPase superfamily. Classic translation factor GTPase family. EF-Tu/EF-1A subfamily. As to quaternary structure, monomer.

The protein resides in the cytoplasm. The enzyme catalyses GTP + H2O = GDP + phosphate + H(+). GTP hydrolase that promotes the GTP-dependent binding of aminoacyl-tRNA to the A-site of ribosomes during protein biosynthesis. The polypeptide is Elongation factor Tu (Synechococcus sp. (strain CC9605)).